Consider the following 377-residue polypeptide: MTHPIRKTHPVIKIMNTALIDLPAPINISAWWNFGFLLGMCLSIQIFTGLFLSMHYIPHIDLAFSSVSHICRDVNFGWLLRVLHANGGSMFFICLYIHIARGIYYSSFHLYFTWMTGVVLLILVMATAFLGYVLPWGQMSFWGATVITNLISAVPYVGSMMVQWLWGGFSVDNATLTRFFTLHFILPFVVLAMVAIHLLFLHQTGSNNPLGLNSNAEKIPFHPYFTIKDLFGVVVMVWLLMILVLSGPYLLSDPDNFIPANPLVTPTHIQPEWYFLFAYAILRSIPNKLGGVVALLASVVILIILPLYKNKFMSSSFYPLNQMLFWGFISIFILLTWIGAQAIEEPFYTSAQILTSLYFFYFILSPLLSVLWDYVME.

The next 4 membrane-spanning stretches (helical) occupy residues Phe34–Met54, Trp78–Ala100, Thr113–Val133, and Phe179–Leu199. Positions 84 and 98 each coordinate heme b. 2 residues coordinate heme b: His183 and His197. His202 contributes to the a ubiquinone binding site. 4 helical membrane passes run Phe225–Leu245, Lys288–Tyr308, Met323–Ile343, and Gln352–Trp372.

The protein belongs to the cytochrome b family. The main subunits of complex b-c1 are: cytochrome b, cytochrome c1 and the Rieske protein. It depends on heme b as a cofactor.

The protein localises to the mitochondrion inner membrane. Its function is as follows. Component of the ubiquinol-cytochrome c reductase complex (complex III or cytochrome b-c1 complex) that is part of the mitochondrial respiratory chain. The b-c1 complex mediates electron transfer from ubiquinol to cytochrome c. Contributes to the generation of a proton gradient across the mitochondrial membrane that is then used for ATP synthesis. The polypeptide is Cytochrome b (mt:Cyt-b) (Priapulus caudatus (Priapulid worm)).